Reading from the N-terminus, the 338-residue chain is Sesquiterpene synthase 1 (338 aa).

Residues D93, N228, S232, and E236 each coordinate Mg(2+). A DDXXD motif motif is present at residues 93 to 97 (DNISD). The NSE/DTE motif motif lies at 228–236 (NDIFSYNVE). Positions 316 and 317 each coordinate (2E,6E)-farnesyl diphosphate.

The protein belongs to the terpene synthase family. Mg(2+) serves as cofactor.

It carries out the reaction (2E,6E)-farnesyl diphosphate = alpha-copaene + diphosphate. It catalyses the reaction (2E,6E)-farnesyl diphosphate = beta-copaene + diphosphate. The enzyme catalyses (2E,6E)-farnesyl diphosphate = alpha-muurolene + diphosphate. The catalysed reaction is (2E,6E)-farnesyl diphosphate = gamma-muurolene + diphosphate. It carries out the reaction (2E,6E)-farnesyl diphosphate = delta-cadinene + diphosphate. Its function is as follows. Terpene cyclase that catalyzes the cyclization of farnesyl diphosphate (FPP) to various sesquiterpenes, including alpha-copaene, beta-copaene, beta-elemene, alpha-muurolene, gamma-muurolene and delta-cadinene. The chain is Sesquiterpene synthase 1 from Postia placenta (strain ATCC 44394 / Madison 698-R) (Brown rot fungus).